A 391-amino-acid chain; its full sequence is 1-acyl-sn-glycerol-3-phosphate acyltransferase 2 (391 aa).

The helical transmembrane segment at 3-23 (MAAAAVIVPLGILFFISGLVV) threads the bilayer. The HXXXXD motif motif lies at 92 to 97 (HRSDID). The next 2 helical transmembrane spans lie at 306 to 326 (LAVV…FLHW) and 334 to 354 (KGIA…QILI). The interval 358-391 (QSERSTPAKVAPAKPKDKHQSGSSSQTEVEEKQK) is disordered.

The protein belongs to the 1-acyl-sn-glycerol-3-phosphate acyltransferase family.

The protein resides in the endoplasmic reticulum membrane. It carries out the reaction a 1-acyl-sn-glycero-3-phosphate + an acyl-CoA = a 1,2-diacyl-sn-glycero-3-phosphate + CoA. It participates in phospholipid metabolism; CDP-diacylglycerol biosynthesis; CDP-diacylglycerol from sn-glycerol 3-phosphate: step 2/3. Converts lysophosphatidic acid (LPA) into phosphatidic acid by incorporating acyl moiety at the 2 position. This Brassica oleracea (Wild cabbage) protein is 1-acyl-sn-glycerol-3-phosphate acyltransferase 2 (LPAT2).